Here is a 230-residue protein sequence, read N- to C-terminus: Ribose-5-phosphate isomerase A (230 aa).

Residues 28-31, 83-86, and 97-100 each bind substrate; these read TGST, DGAD, and KGLG. The Proton acceptor role is filled by Glu106. Lys124 is a binding site for substrate.

Belongs to the ribose 5-phosphate isomerase family. As to quaternary structure, homodimer.

It carries out the reaction aldehydo-D-ribose 5-phosphate = D-ribulose 5-phosphate. It participates in carbohydrate degradation; pentose phosphate pathway; D-ribose 5-phosphate from D-ribulose 5-phosphate (non-oxidative stage): step 1/1. Catalyzes the reversible conversion of ribose-5-phosphate to ribulose 5-phosphate. The sequence is that of Ribose-5-phosphate isomerase A from Gloeobacter violaceus (strain ATCC 29082 / PCC 7421).